Consider the following 1500-residue polypeptide: Secreted chitinase LysM12 (1500 aa).

Positions methionine 1 to alanine 23 are cleaved as a signal peptide. Asparagine 53, asparagine 225, asparagine 251, and asparagine 270 each carry an N-linked (GlcNAc...) asparagine glycan. LysM domains lie at arginine 303–cysteine 348 and alanine 367–isoleucine 415. The 69-residue stretch at aspartate 428–methionine 496 folds into the Chitin-binding type-1 domain. 4 disulfide bridges follow: cysteine 431–cysteine 459, cysteine 453–cysteine 465, cysteine 458–cysteine 472, and cysteine 490–cysteine 494. Residues phenylalanine 507–glycine 879 enclose the GH18 domain. Glutamate 625 functions as the Proton donor in the catalytic mechanism. Tyrosine 626 serves as a coordination point for chitin. Asparagine 721 and asparagine 800 each carry an N-linked (GlcNAc...) asparagine glycan. Tryptophan 852 serves as a coordination point for chitin. Asparagine 892 and asparagine 983 each carry an N-linked (GlcNAc...) asparagine glycan. The interval isoleucine 1164 to glutamate 1193 is disordered. The span at proline 1169–glutamate 1193 shows a compositional bias: basic and acidic residues.

It belongs to the glycosyl hydrolase 18 family. Chitinase class V subfamily.

It localises to the secreted. It catalyses the reaction Random endo-hydrolysis of N-acetyl-beta-D-glucosaminide (1-&gt;4)-beta-linkages in chitin and chitodextrins.. In terms of biological role, secreted chitinase involved in the degradation of chitin, a component of the cell walls of fungi and exoskeletal elements of some animals (including worms and arthropods). Involved in pathogenesis via manipulation of host defenses for successful infection. In Penicillium expansum (Blue mold rot fungus), this protein is Secreted chitinase LysM12.